Consider the following 429-residue polypeptide: Enolase (429 aa).

Position 163 (Q163) interacts with (2R)-2-phosphoglycerate. The active-site Proton donor is the E205. The Mg(2+) site is built by D242, E287, and D314. Residues K339, R368, S369, and K390 each contribute to the (2R)-2-phosphoglycerate site. The active-site Proton acceptor is K339.

It belongs to the enolase family. Requires Mg(2+) as cofactor.

The protein resides in the cytoplasm. It is found in the secreted. Its subcellular location is the cell surface. It catalyses the reaction (2R)-2-phosphoglycerate = phosphoenolpyruvate + H2O. It participates in carbohydrate degradation; glycolysis; pyruvate from D-glyceraldehyde 3-phosphate: step 4/5. In terms of biological role, catalyzes the reversible conversion of 2-phosphoglycerate (2-PG) into phosphoenolpyruvate (PEP). It is essential for the degradation of carbohydrates via glycolysis. In Anaeromyxobacter dehalogenans (strain 2CP-C), this protein is Enolase.